The primary structure comprises 285 residues: Pantothenate synthetase (285 aa).

30–37 is a binding site for ATP; that stretch reads MGFLHEGH. His37 acts as the Proton donor in catalysis. Gln61 contributes to the (R)-pantoate binding site. Gln61 contributes to the beta-alanine binding site. 148–151 contributes to the ATP binding site; sequence GKKD. Residue Gln154 participates in (R)-pantoate binding. ATP contacts are provided by residues Val177 and 185 to 188; that span reads LSSR.

It belongs to the pantothenate synthetase family. Homodimer.

The protein resides in the cytoplasm. It carries out the reaction (R)-pantoate + beta-alanine + ATP = (R)-pantothenate + AMP + diphosphate + H(+). Its pathway is cofactor biosynthesis; (R)-pantothenate biosynthesis; (R)-pantothenate from (R)-pantoate and beta-alanine: step 1/1. Its function is as follows. Catalyzes the condensation of pantoate with beta-alanine in an ATP-dependent reaction via a pantoyl-adenylate intermediate. This chain is Pantothenate synthetase, found in Leptospira interrogans serogroup Icterohaemorrhagiae serovar copenhageni (strain Fiocruz L1-130).